A 428-amino-acid chain; its full sequence is Trigger factor (428 aa).

One can recognise a PPIase FKBP-type domain in the interval 166 to 250 (GDIVTFDFKG…IKNIKEKILP (85 aa)).

It belongs to the FKBP-type PPIase family. Tig subfamily.

The protein resides in the cytoplasm. It carries out the reaction [protein]-peptidylproline (omega=180) = [protein]-peptidylproline (omega=0). Its function is as follows. Involved in protein export. Acts as a chaperone by maintaining the newly synthesized protein in an open conformation. Functions as a peptidyl-prolyl cis-trans isomerase. The protein is Trigger factor of Mycoplasma mycoides subsp. mycoides SC (strain CCUG 32753 / NCTC 10114 / PG1).